The sequence spans 76 residues: uncharacterized protein (76 aa).

Residues 18–38 (FISALFFFNAVCIVSDNLLII) traverse the membrane as a helical segment.

It is found in the cell membrane. This is an uncharacterized protein from Escherichia coli O6:H1 (strain CFT073 / ATCC 700928 / UPEC).